The sequence spans 96 residues: Co-chaperonin GroES (96 aa).

A disordered region spans residues 26 to 48 (LLPGSAQEKPSQGEVLATGNGQI).

The protein belongs to the GroES chaperonin family. Heptamer of 7 subunits arranged in a ring. Interacts with the chaperonin GroEL.

The protein localises to the cytoplasm. In terms of biological role, together with the chaperonin GroEL, plays an essential role in assisting protein folding. The GroEL-GroES system forms a nano-cage that allows encapsulation of the non-native substrate proteins and provides a physical environment optimized to promote and accelerate protein folding. GroES binds to the apical surface of the GroEL ring, thereby capping the opening of the GroEL channel. The protein is Co-chaperonin GroES of Psychrobacter arcticus (strain DSM 17307 / VKM B-2377 / 273-4).